The primary structure comprises 226 residues: Urease accessory protein UreE (226 aa).

The segment at 192–226 (PHGSGLHIHSIHSHGDGHSHDHDHSHGDHDSDHKH) is disordered. Residues 204 to 226 (SHGDGHSHDHDHSHGDHDSDHKH) show a composition bias toward basic and acidic residues.

This sequence belongs to the UreE family.

The protein resides in the cytoplasm. Its function is as follows. Involved in urease metallocenter assembly. Binds nickel. Probably functions as a nickel donor during metallocenter assembly. This Yersinia intermedia protein is Urease accessory protein UreE.